The sequence spans 333 residues: 6-phosphogluconolactonase (333 aa).

This sequence belongs to the cycloisomerase 2 family.

It catalyses the reaction 6-phospho-D-glucono-1,5-lactone + H2O = 6-phospho-D-gluconate + H(+). Its pathway is carbohydrate degradation; pentose phosphate pathway; D-ribulose 5-phosphate from D-glucose 6-phosphate (oxidative stage): step 2/3. Its function is as follows. Catalyzes the hydrolysis of 6-phosphogluconolactone to 6-phosphogluconate. The chain is 6-phosphogluconolactonase from Yersinia enterocolitica serotype O:8 / biotype 1B (strain NCTC 13174 / 8081).